The primary structure comprises 238 residues: Doublecortin domain-containing protein (238 aa).

A partial p25alpha domain region spans residues 82–112 (VFERLNDKQFYTGVQKTKFMELLKNNKNKSS). Residues 151–232 (KTIFLFNNEK…GDPPAPIRNL (82 aa)) form the Doublecortin domain.

Interacts with alpha-tubulin 1 and beta-tubulin; the interaction stabilizes microtubule assembly.

It is found in the cytoplasm. It localises to the cytoskeleton. Involved in the stabilization of microtubules. Probably by controlling microtubules stabilization, plays a role in invasion, microneme secretion and parasite growth in host erythrocytes. This chain is Doublecortin domain-containing protein, found in Plasmodium falciparum (isolate 3D7).